Here is a 445-residue protein sequence, read N- to C-terminus: Trigger factor (445 aa).

In terms of domain architecture, PPIase FKBP-type spans 168–253 (GDAVIVDFVG…IHEVRAPQTP (86 aa)).

This sequence belongs to the FKBP-type PPIase family. Tig subfamily.

It localises to the cytoplasm. The catalysed reaction is [protein]-peptidylproline (omega=180) = [protein]-peptidylproline (omega=0). In terms of biological role, involved in protein export. Acts as a chaperone by maintaining the newly synthesized protein in an open conformation. Functions as a peptidyl-prolyl cis-trans isomerase. The polypeptide is Trigger factor (Hyphomonas neptunium (strain ATCC 15444)).